A 601-amino-acid polypeptide reads, in one-letter code: MVKMSIQLNEFQKKALQSFLMSDKNLLITAPTGTGKSFLAMLMAMETKSRVVYTVPLRALALQLNDDFHNKVAPLVNGYADSVALTSEVYEEDPENLEERVIFTTYEKADAIFRRHYPWTDRIETLIIDEIHNIGDKERGKAIENLIAYAMNEGIRIVAMSATIPDVNKIAEIIDAEIIKTDERPIPLYKAVKIGNKLYFEDGDVIELKEDFIKKMVRKNKVVMIFTSTRKKAEELYMIYDRKFQNKVAFFHAGLDAETKLRLLEETRQGKYNIIVSTTALSQGVNFPFYAVVFDDLKLPIIEYGRFTGWKQITPIEFDQICGRAGRPGYDEEGLCIIEATDIRQAEKLKRTYFNTSYGTITGHHVLEDFLLALISKYIYAKPDRIMEATKHTISFRNISEELVKEKLEELKNAKLIGEDGTGYFVTLYGRAVAESYFDVKDAITYHDVLTKNNVKEEEIINAILENENVLNASKGENVNIIFNSWIKGVDEKTIVKATKNMTLNDLNKLVQTLSWQTYGVYRITKALGKKELADKLRLLFLEIRYGVPASALALVQLPGIGRKRAIELMRNGIHNKTELCSQKEISKKIIGEKMVKVLCK.

Positions 17 to 182 (QSFLMSDKNL…IIDAEIIKTD (166 aa)) constitute a Helicase ATP-binding domain. 30 to 37 (APTGTGKS) lines the ATP pocket. The short motif at 129 to 132 (DEIH) is the DEAH box element. A Helicase C-terminal domain is found at 208 to 375 (LKEDFIKKMV…VLEDFLLALI (168 aa)).

This chain is Putative helicase 7 (SIFV0007), found in Saccharolobus islandicus (Sulfolobus islandicus).